Reading from the N-terminus, the 322-residue chain is uncharacterized protein (322 aa).

Positions 205-286 form a coiled coil; sequence QEIKNAHAAL…LKKAISEAVQ (82 aa). 2 stretches are compositionally biased toward basic and acidic residues: residues 254–281 and 290–299; these read EKEEELNKKDKEKEEETEKEGEKLKKAI and DRIEAIEKSR. A disordered region spans residues 254 to 322; sequence EKEEELNKKD…VQKSIWSGLF (69 aa). The span at 310-322 shows a compositional bias: polar residues; that stretch reads SEQVQKSIWSGLF.

It to B.subtilis XkdF.

This is an uncharacterized protein from Bacillus subtilis (strain 168).